We begin with the raw amino-acid sequence, 399 residues long: Acetate kinase (399 aa).

Residue N10 coordinates Mg(2+). Residue K17 coordinates ATP. A substrate-binding site is contributed by R91. D148 functions as the Proton donor/acceptor in the catalytic mechanism. ATP is bound by residues 208 to 212 (HLGNG), 283 to 285 (DCR), and 331 to 335 (GIGEN). E385 is a binding site for Mg(2+).

The protein belongs to the acetokinase family. As to quaternary structure, homodimer. The cofactor is Mg(2+). It depends on Mn(2+) as a cofactor.

The protein localises to the cytoplasm. It carries out the reaction acetate + ATP = acetyl phosphate + ADP. It functions in the pathway metabolic intermediate biosynthesis; acetyl-CoA biosynthesis; acetyl-CoA from acetate: step 1/2. Catalyzes the formation of acetyl phosphate from acetate and ATP. Can also catalyze the reverse reaction. The chain is Acetate kinase from Shewanella baltica (strain OS223).